A 329-amino-acid chain; its full sequence is GTP 3',8-cyclase (329 aa).

Positions 1-229 constitute a Radical SAM core domain; that stretch reads MNPVDYLRIS…TAFVQGNGPA (229 aa). A GTP-binding site is contributed by R8. Residues C15 and C19 each contribute to the [4Fe-4S] cluster site. Y21 provides a ligand contact to S-adenosyl-L-methionine. C22 provides a ligand contact to [4Fe-4S] cluster. A GTP-binding site is contributed by R60. Residue G64 participates in S-adenosyl-L-methionine binding. T91 provides a ligand contact to GTP. S115 is a binding site for S-adenosyl-L-methionine. K155 contributes to the GTP binding site. M189 provides a ligand contact to S-adenosyl-L-methionine. [4Fe-4S] cluster contacts are provided by C252 and C255. 257–259 provides a ligand contact to GTP; sequence RMR. A [4Fe-4S] cluster-binding site is contributed by C269.

This sequence belongs to the radical SAM superfamily. MoaA family. As to quaternary structure, monomer and homodimer. Requires [4Fe-4S] cluster as cofactor.

It catalyses the reaction GTP + AH2 + S-adenosyl-L-methionine = (8S)-3',8-cyclo-7,8-dihydroguanosine 5'-triphosphate + 5'-deoxyadenosine + L-methionine + A + H(+). The protein operates within cofactor biosynthesis; molybdopterin biosynthesis. Catalyzes the cyclization of GTP to (8S)-3',8-cyclo-7,8-dihydroguanosine 5'-triphosphate. The chain is GTP 3',8-cyclase from Picosynechococcus sp. (strain ATCC 27264 / PCC 7002 / PR-6) (Agmenellum quadruplicatum).